The primary structure comprises 445 residues: Phosphoglucosamine mutase (445 aa).

Serine 102 acts as the Phosphoserine intermediate in catalysis. The Mg(2+) site is built by serine 102, aspartate 241, aspartate 243, and aspartate 245. Serine 102 carries the post-translational modification Phosphoserine.

This sequence belongs to the phosphohexose mutase family. The cofactor is Mg(2+). In terms of processing, activated by phosphorylation.

The enzyme catalyses alpha-D-glucosamine 1-phosphate = D-glucosamine 6-phosphate. Functionally, catalyzes the conversion of glucosamine-6-phosphate to glucosamine-1-phosphate. The sequence is that of Phosphoglucosamine mutase from Escherichia coli (strain 55989 / EAEC).